We begin with the raw amino-acid sequence, 754 residues long: Ubiquitin carboxyl-terminal hydrolase 9 (754 aa).

Over residues 1–14 the composition is skewed to basic residues; the sequence is MIKRWLSVNRKKSH. Positions 1-76 are disordered; that stretch reads MIKRWLSVNR…SKFSSQTDNL (76 aa). A compositionally biased stretch (low complexity) spans 42-58; that stretch reads SIAKSPSAKSSTSSIPS. In terms of domain architecture, USP spans 134–667; it reads FGYENFGNTC…TAYVLFYKET (534 aa). Cys143 functions as the Nucleophile in the catalytic mechanism. A compositionally biased stretch (polar residues) spans 194 to 209; the sequence is ETSTNSGNSNTGYQSN. The interval 194-273 is disordered; sequence ETSTNSGNSN…DNNEMERPQP (80 aa). Residues 222-233 are compositionally biased toward low complexity; the sequence is QSDQDNSSSSTQ. Residues 250-272 are compositionally biased toward basic and acidic residues; it reads GKDKSNYKDSAKKDDNNEMERPQ. The Proton acceptor role is filled by His618. Positions 726–754 are disordered; the sequence is VKTAETKTPLNDKKRNKQKRKSRILSFIK. Basic and acidic residues predominate over residues 727 to 738; sequence KTAETKTPLNDK. Basic residues predominate over residues 739 to 748; that stretch reads KRNKQKRKSR.

It belongs to the peptidase C19 family.

The catalysed reaction is Thiol-dependent hydrolysis of ester, thioester, amide, peptide and isopeptide bonds formed by the C-terminal Gly of ubiquitin (a 76-residue protein attached to proteins as an intracellular targeting signal).. The polypeptide is Ubiquitin carboxyl-terminal hydrolase 9 (UBP9) (Saccharomyces cerevisiae (strain ATCC 204508 / S288c) (Baker's yeast)).